Consider the following 434-residue polypeptide: GPI mannosyltransferase 2 (434 aa).

A run of 10 helical transmembrane segments spans residues 22 to 42, 109 to 129, 145 to 165, 170 to 190, 210 to 230, 252 to 272, 311 to 331, 354 to 374, 377 to 397, and 411 to 431; these read LSLA…GCPG, ILSF…SVLA, GALI…GAFL, GESL…SSLL, LFSI…LFAF, LGVI…PQWI, YWTL…FLMC, LAAP…VQII, ISSG…SHVA, and IAIQ…GSFL.

The protein belongs to the PIGV family.

The protein resides in the endoplasmic reticulum membrane. The protein operates within glycolipid biosynthesis; glycosylphosphatidylinositol-anchor biosynthesis. In terms of biological role, mannosyltransferase involved in glycosylphosphatidylinositol-anchor biosynthesis. Transfers the second mannose to the glycosylphosphatidylinositol during GPI precursor assembly. In Aspergillus oryzae (strain ATCC 42149 / RIB 40) (Yellow koji mold), this protein is GPI mannosyltransferase 2 (gpi18).